The chain runs to 260 residues: Dynein regulatory complex subunit 6 (260 aa).

Residues 1 to 13 (MAPKKKGGGKKKK) are compositionally biased toward basic residues. Positions 1 to 43 (MAPKKKGGGKKKKKDDGAEPPHDGSWERAVESGTWEKPVTDLP) are disordered. A compositionally biased stretch (basic and acidic residues) spans 14 to 30 (KDDGAEPPHDGSWERAV).

Belongs to the DRC6 family. In terms of assembly, component of the nexin-dynein regulatory complex (N-DRC).

The protein resides in the cytoplasm. It is found in the cytoskeleton. The protein localises to the flagellum axoneme. Its function is as follows. Component of the nexin-dynein regulatory complex (N-DRC), a key regulator of ciliary/flagellar motility which maintains the alignment and integrity of the distal axoneme and regulates microtubule sliding in motile axonemes. This is Dynein regulatory complex subunit 6 from Chlamydomonas reinhardtii (Chlamydomonas smithii).